The primary structure comprises 161 residues: MKSLQKGFTLIELMIVVAIIGILAAFAIPAYNDYIARSQAAEGVSLADGLKIRIAENLQDGACKGPDADPSTGVVGNEDVGKFGKAVITDNAYNPDAKEPGDENGCQVLITYGEGTAKDKVSSLIKGKKLQLNQLVNGSYTQGDGTDLPAKFIPNAVKKSQ.

Positions Met1–Gly7 are cleaved as a propeptide — leader sequence. N-methylphenylalanine is present on Phe8. The chain crosses the membrane as a helical span at residues Phe8 to Ile28. A disulfide bridge links Cys63 with Cys106.

It belongs to the N-Me-Phe pilin family. In terms of assembly, the pili are polar flexible filaments of about 5.4 nanometers diameter and 2.5 micrometers average length; they consist of only a single polypeptide chain arranged in a helical configuration of five subunits per turn in the assembled pilus.

The protein localises to the fimbrium. Its subcellular location is the membrane. Major component of the type IV fimbriae that plays an essential role in twitching motility, natural transformation, and protease secretion. This Dichelobacter nodosus (Bacteroides nodosus) protein is Type IV major fimbrial protein FimA (fimA).